The primary structure comprises 74 residues: MFTMKKSMLVLFFLGTISLSLCEEERNADEDDGEMTEEVKRGILDKLKEFGISAARGVAQSLLNTASCKLAKTC.

The N-terminal stretch at 1-22 is a signal peptide; the sequence is MFTMKKSMLVLFFLGTISLSLC. The propeptide at 23 to 39 is removed in mature form; sequence EEERNADEDDGEMTEEV. Cysteine 68 and cysteine 74 are disulfide-bonded.

Expressed by the skin glands.

Its subcellular location is the secreted. Antimicrobial peptide active against a variety of Gram-positive and some Gram-negative bacterial strains. Has antifungal activity against a slime mold isolate. Has hemolytic activity against human erythrocytes. The polypeptide is Brevinin-2CG1 (Amolops chunganensis (Chungan torrent frog)).